The chain runs to 717 residues: Glycine--tRNA ligase beta subunit (717 aa).

The protein belongs to the class-II aminoacyl-tRNA synthetase family. As to quaternary structure, tetramer of two alpha and two beta subunits.

It localises to the cytoplasm. The catalysed reaction is tRNA(Gly) + glycine + ATP = glycyl-tRNA(Gly) + AMP + diphosphate. The protein is Glycine--tRNA ligase beta subunit of Agrobacterium fabrum (strain C58 / ATCC 33970) (Agrobacterium tumefaciens (strain C58)).